Reading from the N-terminus, the 581-residue chain is Sabinene synthase 1, chloroplastic (581 aa).

The N-terminal 28 residues, 1–28 (MPLNSLHNLERKPSKAWSTSCTAPAARL), are a transit peptide targeting the chloroplast. Positions 297, 334, 338, 475, and 478 each coordinate (2E)-geranyl diphosphate. Residues aspartate 334 and aspartate 338 each coordinate Mg(2+). Positions 334 to 338 (DDVYD) match the DDXXD motif motif. Residues aspartate 478, threonine 482, and glutamate 486 each contribute to the Mg(2+) site.

It belongs to the terpene synthase family. Tpsb subfamily. Mg(2+) is required as a cofactor. Mn(2+) serves as cofactor.

The protein resides in the plastid. Its subcellular location is the chloroplast. It carries out the reaction (2E)-geranyl diphosphate = sabinene + diphosphate. The enzyme catalyses (2E)-geranyl diphosphate = beta-myrcene + diphosphate. Its pathway is secondary metabolite biosynthesis; terpenoid biosynthesis. Monoterpene synthase (TPS) involved in the biosynthesis of monoterpene natural products, components of the chemical defense arsenal. Catalyzes the conversion of (2E)-geranyl diphosphate (GPP) into sabinene, and, as minor products, myrcene. The chain is Sabinene synthase 1, chloroplastic from Salvia pomifera (Apple sage).